The primary structure comprises 350 residues: Eukaryotic translation initiation factor 3 subunit I (350 aa).

WD repeat units lie at residues 8-49 (GHER…GTLE), 51-89 (HQGVIWSIDVDPETLLCATGGGDLAVKLWTVENGQCVYT), 91-135 (NSPS…ASLT), 149-190 (QNGS…KSLQ), 198-240 (EKNV…KVYK), and 296-335 (GHFGPLNTVAVHPDGTGYSSGGEDGFIRVHTFDKSYKDFL).

This sequence belongs to the eIF-3 subunit I family. As to quaternary structure, component of the eukaryotic translation initiation factor 3 (eIF-3) complex.

The protein resides in the cytoplasm. Functionally, component of the eukaryotic translation initiation factor 3 (eIF-3) complex, which is involved in protein synthesis of a specialized repertoire of mRNAs and, together with other initiation factors, stimulates binding of mRNA and methionyl-tRNAi to the 40S ribosome. The eIF-3 complex specifically targets and initiates translation of a subset of mRNAs involved in cell proliferation. The protein is Eukaryotic translation initiation factor 3 subunit I of Lodderomyces elongisporus (strain ATCC 11503 / CBS 2605 / JCM 1781 / NBRC 1676 / NRRL YB-4239) (Yeast).